A 578-amino-acid polypeptide reads, in one-letter code: MPRGLELLIAQTILQGFDAQYGRFLEVTSGAQQRFEQADWHAVQLAMKNRIHLYDHHVGLVVEQLRCITNGQSTDAAFLLRVKEHYTRLLPDYPRFEIAESFFNSVYCRLFDHRSLTPERLFIFSSQPERSFRTIPRPLAKDFHPDHGWESLLMRVISDLPLRLRWQNKSRDIHYIIRHLTETLGTDNLAESHLQVANELFYRNKAAWLVGKLITPSGTLPFLLPIHQTDDGELFIDTCLTTTAEASIVFGFARSYFMVYAPLPAALVEWLREILPGKTTAELYMAIGCQKHAKTESYREYLVYLQGCNEQFIEAPGIRGMVMLVFTLPGFDRVFKVIKDKFAPQKEMSAAHVRACYQLVKEHDRVGRMADTQEFENFVLEKRHISPALMELLLQEAAEKITDLGEQIVIRHLYIERRMVPLNIWLEQVEGQQLRDAIEEYGNAIRQLAAANIFPGDMLFKNFGVTRHGRVVFYDYDEICYMTEVNFRDIPPPRYPEDELASEPWYSVSPGDVFPEEFRHWLCADPRIGPLFEEMHADLFRADYWRALQNRIREGHVEDVYAYRRRQRFSVRYGEMLF.

ATP-binding positions include 315-321 (APGIRGM) and Lys-336. Asp-371 is an active-site residue.

Belongs to the AceK family.

It localises to the cytoplasm. It catalyses the reaction L-seryl-[isocitrate dehydrogenase] + ATP = O-phospho-L-seryl-[isocitrate dehydrogenase] + ADP + H(+). Functionally, bifunctional enzyme which can phosphorylate or dephosphorylate isocitrate dehydrogenase (IDH) on a specific serine residue. This is a regulatory mechanism which enables bacteria to bypass the Krebs cycle via the glyoxylate shunt in response to the source of carbon. When bacteria are grown on glucose, IDH is fully active and unphosphorylated, but when grown on acetate or ethanol, the activity of IDH declines drastically concomitant with its phosphorylation. In Shigella boydii serotype 18 (strain CDC 3083-94 / BS512), this protein is Isocitrate dehydrogenase kinase/phosphatase.